Consider the following 123-residue polypeptide: Large ribosomal subunit protein eL8 (123 aa).

It belongs to the eukaryotic ribosomal protein eL8 family. Part of the 50S ribosomal subunit. Probably part of the RNase P complex.

The protein resides in the cytoplasm. Functionally, multifunctional RNA-binding protein that recognizes the K-turn motif in ribosomal RNA, the RNA component of RNase P, box H/ACA, box C/D and box C'/D' sRNAs. The protein is Large ribosomal subunit protein eL8 of Thermococcus gammatolerans (strain DSM 15229 / JCM 11827 / EJ3).